The chain runs to 297 residues: N-acetylneuraminate lyase (297 aa).

Ser47 and Thr48 together coordinate aceneuramate. Tyr137 acts as the Proton donor in catalysis. Lys165 serves as the catalytic Schiff-base intermediate with substrate. Thr167, Gly189, Asp191, Glu192, and Ser208 together coordinate aceneuramate.

Belongs to the DapA family. NanA subfamily. Homotetramer.

The protein resides in the cytoplasm. It carries out the reaction aceneuramate = aldehydo-N-acetyl-D-mannosamine + pyruvate. It functions in the pathway amino-sugar metabolism; N-acetylneuraminate degradation; D-fructose 6-phosphate from N-acetylneuraminate: step 1/5. Catalyzes the reversible aldol cleavage of N-acetylneuraminic acid (sialic acid; Neu5Ac) to form pyruvate and N-acetylmannosamine (ManNAc) via a Schiff base intermediate. In Salmonella paratyphi A (strain AKU_12601), this protein is N-acetylneuraminate lyase.